Reading from the N-terminus, the 350-residue chain is UDP-N-acetylenolpyruvoylglucosamine reductase (350 aa).

The FAD-binding PCMH-type domain occupies 25–194 (VGPVARRLIT…LDVGGRSAPL (170 aa)). Arginine 166 is a catalytic residue. Serine 243 acts as the Proton donor in catalysis. Residue glutamate 342 is part of the active site.

It belongs to the MurB family. FAD serves as cofactor.

It localises to the cytoplasm. The enzyme catalyses UDP-N-acetyl-alpha-D-muramate + NADP(+) = UDP-N-acetyl-3-O-(1-carboxyvinyl)-alpha-D-glucosamine + NADPH + H(+). Its pathway is cell wall biogenesis; peptidoglycan biosynthesis. Functionally, cell wall formation. This is UDP-N-acetylenolpyruvoylglucosamine reductase from Mycobacterium sp. (strain MCS).